A 360-amino-acid polypeptide reads, in one-letter code: MSRVYNFSAGPAAIPEEVLFTVRDELLDWHGIGMSIAEVSHRGEEFIGVAEEAARDLRELLAVPESYHILFLQGGSRLQFDMVPMNLLANHKKAVYIDSGVWSNLAIREAKNYCDPHLATNAKELNYTGIPDQATWDMPNEAAYFYYVDNETVNGIEFPFIPDTDLTLVCDMSSNLLSRPFDVSRYGLIFACAQKNMGLAGLTIVIVHDDLLKRSPLPTTPSYLQYALHAKERSFINTPPTFAWYLAGLIFKWVKNQGGVAVLAERNQRKAAKLYKFIDKSNFFDNPINPTYRSRMNVIFRLADERLNSLFLKEATENGLANLKGHRLLGGMRASIYNAMTEEGVDALINFMGQFEKRHG.

L-glutamate is bound at residue R42. Residues W102, T152, D171, and Q194 each contribute to the pyridoxal 5'-phosphate site. K195 is subject to N6-(pyridoxal phosphate)lysine. 237-238 provides a ligand contact to pyridoxal 5'-phosphate; sequence NT.

This sequence belongs to the class-V pyridoxal-phosphate-dependent aminotransferase family. SerC subfamily. As to quaternary structure, homodimer. It depends on pyridoxal 5'-phosphate as a cofactor.

It is found in the cytoplasm. It carries out the reaction O-phospho-L-serine + 2-oxoglutarate = 3-phosphooxypyruvate + L-glutamate. It catalyses the reaction 4-(phosphooxy)-L-threonine + 2-oxoglutarate = (R)-3-hydroxy-2-oxo-4-phosphooxybutanoate + L-glutamate. It participates in amino-acid biosynthesis; L-serine biosynthesis; L-serine from 3-phospho-D-glycerate: step 2/3. The protein operates within cofactor biosynthesis; pyridoxine 5'-phosphate biosynthesis; pyridoxine 5'-phosphate from D-erythrose 4-phosphate: step 3/5. Functionally, catalyzes the reversible conversion of 3-phosphohydroxypyruvate to phosphoserine and of 3-hydroxy-2-oxo-4-phosphonooxybutanoate to phosphohydroxythreonine. In Coxiella burnetii (strain RSA 331 / Henzerling II), this protein is Phosphoserine aminotransferase.